Reading from the N-terminus, the 207-residue chain is ATP-dependent dethiobiotin synthetase BioD (207 aa).

11 to 16 (DVGKTF) is a binding site for ATP. Mg(2+) is bound at residue Thr15. Lys31 is a catalytic residue. Ser35 serves as a coordination point for substrate. Residues Asp42, 95–98 (ETSG), and 155–156 (NQ) contribute to the ATP site. Asp42 and Glu95 together coordinate Mg(2+).

This sequence belongs to the dethiobiotin synthetase family. As to quaternary structure, homodimer. It depends on Mg(2+) as a cofactor.

It localises to the cytoplasm. It catalyses the reaction (7R,8S)-7,8-diammoniononanoate + CO2 + ATP = (4R,5S)-dethiobiotin + ADP + phosphate + 3 H(+). It participates in cofactor biosynthesis; biotin biosynthesis; biotin from 7,8-diaminononanoate: step 1/2. In terms of biological role, catalyzes a mechanistically unusual reaction, the ATP-dependent insertion of CO2 between the N7 and N8 nitrogen atoms of 7,8-diaminopelargonic acid (DAPA, also called 7,8-diammoniononanoate) to form a ureido ring. This chain is ATP-dependent dethiobiotin synthetase BioD, found in Chlamydia abortus (strain DSM 27085 / S26/3) (Chlamydophila abortus).